The primary structure comprises 433 residues: Pectinesterase B (433 aa).

Positions 1–21 (MSLTHYSGLAAAVSMSLILTA) are cleaved as a signal peptide. C22 is lipidated: N-palmitoyl cysteine. Residue C22 is the site of S-diacylglycerol cysteine attachment. Over 22–433 (CGGQTPNSAR…EYNTQVLLHE (412 aa)) the chain is Periplasmic. Substrate is bound by residues T202 and Q236. The Proton donor role is filled by D259. Catalysis depends on D292, which acts as the Nucleophile. Positions 356 and 358 each coordinate substrate.

Belongs to the pectinesterase family.

Its subcellular location is the cell outer membrane. It carries out the reaction [(1-&gt;4)-alpha-D-galacturonosyl methyl ester](n) + n H2O = [(1-&gt;4)-alpha-D-galacturonosyl](n) + n methanol + n H(+). It functions in the pathway glycan metabolism; pectin degradation; 2-dehydro-3-deoxy-D-gluconate from pectin: step 1/5. Functionally, probably involved in the degradation of methylated oligogalacturonides present in the periplasm. More active on methylated oligogalacturides than on pectin. This Dickeya dadantii (strain 3937) (Erwinia chrysanthemi (strain 3937)) protein is Pectinesterase B.